The primary structure comprises 386 residues: Chaperone protein DnaJ (386 aa).

Residues 6–71 (DYYEILGVDR…QKRARYDQFG (66 aa)) form the J domain. A CR-type zinc finger spans residues 144–226 (GTEKEVTVSR…CGGKGRVRKH (83 aa)). The Zn(2+) site is built by cysteine 157, cysteine 160, cysteine 174, cysteine 177, cysteine 200, cysteine 203, cysteine 214, and cysteine 217. CXXCXGXG motif repeat units follow at residues 157 to 164 (CPTCSGSG), 174 to 181 (CRQCNGTG), 200 to 207 (CDVCHGEG), and 214 to 221 (CETCGGKG).

Belongs to the DnaJ family. In terms of assembly, homodimer. Zn(2+) serves as cofactor.

It localises to the cytoplasm. Functionally, participates actively in the response to hyperosmotic and heat shock by preventing the aggregation of stress-denatured proteins and by disaggregating proteins, also in an autonomous, DnaK-independent fashion. Unfolded proteins bind initially to DnaJ; upon interaction with the DnaJ-bound protein, DnaK hydrolyzes its bound ATP, resulting in the formation of a stable complex. GrpE releases ADP from DnaK; ATP binding to DnaK triggers the release of the substrate protein, thus completing the reaction cycle. Several rounds of ATP-dependent interactions between DnaJ, DnaK and GrpE are required for fully efficient folding. Also involved, together with DnaK and GrpE, in the DNA replication of plasmids through activation of initiation proteins. The polypeptide is Chaperone protein DnaJ (Acetivibrio thermocellus (strain ATCC 27405 / DSM 1237 / JCM 9322 / NBRC 103400 / NCIMB 10682 / NRRL B-4536 / VPI 7372) (Clostridium thermocellum)).